The following is a 193-amino-acid chain: Auxin-induced protein 22D (193 aa).

The disordered stretch occupies residues 16 to 68; it reads ATELRLGLPGSDEPEKRATARSNKRSSPEASDEESISNGSDVTKEDNVVPPAK. The EAR-like (transcriptional repression) signature appears at 19 to 23; the sequence is LRLGL. Residues 97–184 form the PB1 domain; sequence GMYVKVSMAG…SCKRLRIMKG (88 aa).

It belongs to the Aux/IAA family. Homodimers and heterodimers.

It is found in the nucleus. Its function is as follows. Aux/IAA proteins are short-lived transcriptional factors that function as repressors of early auxin response genes at low auxin concentrations. Repression is thought to result from the interaction with auxin response factors (ARFs), proteins that bind to the auxin-responsive promoter element (AuxRE). Formation of heterodimers with ARF proteins may alter their ability to modulate early auxin response genes expression. This is Auxin-induced protein 22D (AUX22D) from Vigna radiata var. radiata (Mung bean).